The chain runs to 89 residues: Small ribosomal subunit protein uS17 (89 aa).

This sequence belongs to the universal ribosomal protein uS17 family. As to quaternary structure, part of the 30S ribosomal subunit.

One of the primary rRNA binding proteins, it binds specifically to the 5'-end of 16S ribosomal RNA. This is Small ribosomal subunit protein uS17 from Xylella fastidiosa (strain 9a5c).